The primary structure comprises 435 residues: Plant UBX domain-containing protein 6 (435 aa).

Disordered stretches follow at residues 1 to 150, 208 to 265, and 311 to 352; these read MDVN…PQKV, ENYT…EDQP, and PTTT…SMSS. A compositionally biased stretch (low complexity) spans 49 to 62; the sequence is TSSFSTFDGSSGYS. The segment covering 112-129 has biased composition (basic and acidic residues); it reads AVEHYGGEENRAIERPEQ. The span at 130-141 shows a compositional bias: low complexity; the sequence is SSRSMSEETVSS. Residues 150–211 enclose the SEP 1 domain; it reads VFTHTVTSWS…IISREEENYT (62 aa). Positions 211 to 222 are enriched in polar residues; the sequence is TESQAGSDSAST. Positions 231–242 are enriched in basic and acidic residues; sequence RAKESAIERSEQ. Residues 252-265 are compositionally biased toward acidic residues; it reads DSAELQEQQQEDQP. In terms of domain architecture, SEP 2 spans 268–343; that stretch reads VVTYTVTIWR…ESTSTEPPLT (76 aa). Low complexity-rich tracts occupy residues 312–323 and 333–349; these read TTTRSTSCSSQT and SEST…QPPS. In terms of domain architecture, UBX spans 357-434; sequence PAAPTTSIQL…GIANSVLVQK (78 aa).

The sequence is that of Plant UBX domain-containing protein 6 from Arabidopsis thaliana (Mouse-ear cress).